Consider the following 320-residue polypeptide: Protoheme IX farnesyltransferase (320 aa).

The interval 1–24 (MSMITERPVSDPAGQSVSATGDGA) is disordered. The next 8 helical transmembrane spans lie at 33-55 (AVVAAYVALTKPRIVELLLVTTV), 68-88 (LWLMAVVLVGGSLAAGAASVL), 117-137 (NALIFGLVLATVSVTLLAVFT), 140-160 (LAAGLTLAAILYYDLVYTAWL), 183-203 (WAAVTGSLAPAAWALFGVVFF), 241-261 (ILVFAWLTVLVSLVTWPLGAG), 262-282 (MGPIYGLPTLVVGVIFLVEAH), and 300-320 (FHWSTTYLTVVFAAVALDALI).

This sequence belongs to the UbiA prenyltransferase family. Protoheme IX farnesyltransferase subfamily.

The protein localises to the cell membrane. It catalyses the reaction heme b + (2E,6E)-farnesyl diphosphate + H2O = Fe(II)-heme o + diphosphate. The protein operates within porphyrin-containing compound metabolism; heme O biosynthesis; heme O from protoheme: step 1/1. Its function is as follows. Converts heme B (protoheme IX) to heme O by substitution of the vinyl group on carbon 2 of heme B porphyrin ring with a hydroxyethyl farnesyl side group. This Salinispora tropica (strain ATCC BAA-916 / DSM 44818 / JCM 13857 / NBRC 105044 / CNB-440) protein is Protoheme IX farnesyltransferase.